A 452-amino-acid chain; its full sequence is Packaging protein 1 (452 aa).

Residues 1 to 78 form a disordered region; sequence MLPCRSTGRR…AKPPQRGSLL (78 aa). An ATP-binding site is contributed by 173–180; that stretch reads GPTGCGKS. Positions 442-452 are DNA-binding; that stretch reads RAYHVRKNKYQ.

The protein belongs to the adenoviridae packaging protein 1 family. Homodimer. Part of a genome packaging complex composed of packaging proteins 1, 2 and 3; this complex specifically binds to the packaging sequence on the left end of viral genomic DNA and performs packaging of the viral genome. Interacts with protein 33K.

Its subcellular location is the virion. The protein localises to the host nucleus. It is found in the host nucleoplasm. It localises to the host nucleolus. Component of the packaging machinery which encapsidates the viral DNA into preformed capsids and transcriptional activator of the viral major late promoter (MLP). Binds, along with packaging proteins 2 and 3, to the specific packaging sequence on the left end of viral genomic DNA and displays ATPase activity thereby providing the power stroke of the packaging machinery. The activity of packaging protein IVa2 is stimulated by protein 33K which acts as a terminase. May be the protein that pumps DNA into the capsid powered by ATP hydrolysis. Specifically binds to the 5'-CG-3' nucleotides of the repeats making up the packaging sequence. Component of the DEF-A and DEF-B transcription factors that bind downstream elements of the major late promoter (MLP), and stimulate transcription from the MLP after initiation of viral DNA replication. DEF-A is a heterodimer packaging proteins 1 and 2 and DEF-B is a homodimer of packaging protein 1. The chain is Packaging protein 1 from Homo sapiens (Human).